The following is a 475-amino-acid chain: AAA-ATPase At1g43910 (475 aa).

A helical transmembrane segment spans residues 11–28; sequence VSAVFSLYTSFSAITMLF. T85 carries the post-translational modification Phosphothreonine. 246-253 lines the ATP pocket; the sequence is GPPGTGKS. Disordered stretches follow at residues 306–328 and 453–475; these read SRRRQSKKKEEDGGEDDGEPQKR and KGEDSSVEEEGEIEDAETKEAET. Residues 457–467 show a composition bias toward acidic residues; it reads SSVEEEGEIED.

Belongs to the AAA ATPase family. BCS1 subfamily. The cofactor is Mg(2+). Expressed in developing shoots.

It localises to the membrane. It catalyses the reaction ATP + H2O = ADP + phosphate + H(+). The polypeptide is AAA-ATPase At1g43910 (Arabidopsis thaliana (Mouse-ear cress)).